The primary structure comprises 159 residues: S-ribosylhomocysteine lyase (159 aa).

Residues His-53, His-57, and Cys-124 each coordinate Fe cation.

The protein belongs to the LuxS family. Homodimer. Fe cation is required as a cofactor.

The catalysed reaction is S-(5-deoxy-D-ribos-5-yl)-L-homocysteine = (S)-4,5-dihydroxypentane-2,3-dione + L-homocysteine. Functionally, involved in the synthesis of autoinducer 2 (AI-2) which is secreted by bacteria and is used to communicate both the cell density and the metabolic potential of the environment. The regulation of gene expression in response to changes in cell density is called quorum sensing. Catalyzes the transformation of S-ribosylhomocysteine (RHC) to homocysteine (HC) and 4,5-dihydroxy-2,3-pentadione (DPD). The chain is S-ribosylhomocysteine lyase from Clostridium beijerinckii (strain ATCC 51743 / NCIMB 8052) (Clostridium acetobutylicum).